The chain runs to 314 residues: Methionyl-tRNA formyltransferase (314 aa).

Ser-110–Pro-113 is a (6S)-5,6,7,8-tetrahydrofolate binding site.

The protein belongs to the Fmt family.

The catalysed reaction is L-methionyl-tRNA(fMet) + (6R)-10-formyltetrahydrofolate = N-formyl-L-methionyl-tRNA(fMet) + (6S)-5,6,7,8-tetrahydrofolate + H(+). In terms of biological role, attaches a formyl group to the free amino group of methionyl-tRNA(fMet). The formyl group appears to play a dual role in the initiator identity of N-formylmethionyl-tRNA by promoting its recognition by IF2 and preventing the misappropriation of this tRNA by the elongation apparatus. The sequence is that of Methionyl-tRNA formyltransferase from Levilactobacillus brevis (strain ATCC 367 / BCRC 12310 / CIP 105137 / JCM 1170 / LMG 11437 / NCIMB 947 / NCTC 947) (Lactobacillus brevis).